A 487-amino-acid chain; its full sequence is 3-octaprenyl-4-hydroxybenzoate carboxy-lyase (487 aa).

Residue N172 coordinates Mn(2+). Residues 175–177, 189–191, and 194–195 contribute to the prenylated FMN site; these read IYR, RWL, and RG. Residue E238 coordinates Mn(2+). The active-site Proton donor is D287.

It belongs to the UbiD family. As to quaternary structure, homohexamer. Prenylated FMN serves as cofactor. Mn(2+) is required as a cofactor.

The protein localises to the cell membrane. The enzyme catalyses a 4-hydroxy-3-(all-trans-polyprenyl)benzoate + H(+) = a 2-(all-trans-polyprenyl)phenol + CO2. It functions in the pathway cofactor biosynthesis; ubiquinone biosynthesis. In terms of biological role, catalyzes the decarboxylation of 3-octaprenyl-4-hydroxy benzoate to 2-octaprenylphenol, an intermediate step in ubiquinone biosynthesis. The protein is 3-octaprenyl-4-hydroxybenzoate carboxy-lyase of Blochmanniella pennsylvanica (strain BPEN).